The chain runs to 260 residues: Neurotrophin-3 (260 aa).

The N-terminal stretch at 1-18 is a signal peptide; the sequence is MSILFYVMFLPYLCGIHA. The propeptide occupies 19–141; sequence TNMDKRNLPE…VNNRTSRRKR (123 aa). Asn134 is a glycosylation site (N-linked (GlcNAc...) asparagine). 3 disulfide bridges follow: Cys155–Cys220, Cys198–Cys249, and Cys208–Cys251.

Belongs to the NGF-beta family.

The protein resides in the secreted. Seems to promote the survival of visceral and proprioceptive sensory neurons. In Xenopus laevis (African clawed frog), this protein is Neurotrophin-3 (ntf3).